Consider the following 403-residue polypeptide: Phosphoglycerate kinase (403 aa).

Residues 22–24, R37, 60–63, R119, and R156 contribute to the substrate site; these read DLN and HLGR. ATP contacts are provided by residues K206, G302, E333, and 359–362; that span reads GGDS.

The protein belongs to the phosphoglycerate kinase family. In terms of assembly, monomer.

It localises to the cytoplasm. The catalysed reaction is (2R)-3-phosphoglycerate + ATP = (2R)-3-phospho-glyceroyl phosphate + ADP. The protein operates within carbohydrate degradation; glycolysis; pyruvate from D-glyceraldehyde 3-phosphate: step 2/5. In Leifsonia xyli subsp. xyli (strain CTCB07), this protein is Phosphoglycerate kinase.